Here is a 499-residue protein sequence, read N- to C-terminus: Ribose import ATP-binding protein RbsA (499 aa).

2 consecutive ABC transporter domains span residues 3 to 240 and 250 to 494; these read VEMS…VGRE and LEPG…TGGD. An ATP-binding site is contributed by 35–42; the sequence is GENGAGKS.

Belongs to the ABC transporter superfamily. Ribose importer (TC 3.A.1.2.1) family. In terms of assembly, the complex is composed of an ATP-binding protein (RbsA), two transmembrane proteins (RbsC) and a solute-binding protein (RbsB).

The protein resides in the cell membrane. It carries out the reaction D-ribose(out) + ATP + H2O = D-ribose(in) + ADP + phosphate + H(+). In terms of biological role, part of the ABC transporter complex RbsABC involved in ribose import. Responsible for energy coupling to the transport system. This Shouchella clausii (strain KSM-K16) (Alkalihalobacillus clausii) protein is Ribose import ATP-binding protein RbsA.